Consider the following 248-residue polypeptide: Ureidoacrylate amidohydrolase RutB (248 aa).

The Proton acceptor role is filled by Asp-43. The active site involves Lys-152. Cys-185 functions as the Nucleophile in the catalytic mechanism.

The protein belongs to the isochorismatase family. RutB subfamily.

The enzyme catalyses (Z)-3-ureidoacrylate + H2O + H(+) = (Z)-3-aminoacrylate + NH4(+) + CO2. The catalysed reaction is (Z)-3-ureidoacrylate + H2O = (Z)-3-aminoacrylate + carbamate + H(+). It catalyses the reaction (Z)-2-methylureidoacrylate + H2O + H(+) = (Z)-2-methylaminoacrylate + NH4(+) + CO2. Hydrolyzes ureidoacrylate to form aminoacrylate and carbamate. The carbamate hydrolyzes spontaneously, thereby releasing one of the nitrogen atoms of the pyrimidine ring as ammonia and one of its carbon atoms as CO2. This is Ureidoacrylate amidohydrolase RutB from Serratia proteamaculans (strain 568).